A 124-amino-acid chain; its full sequence is Small ribosomal subunit protein eS6 (124 aa).

The protein belongs to the eukaryotic ribosomal protein eS6 family.

This chain is Small ribosomal subunit protein eS6, found in Methanococcus maripaludis (strain DSM 14266 / JCM 13030 / NBRC 101832 / S2 / LL).